The primary structure comprises 152 residues: Alpha-amylase inhibitor BDAI-1 (152 aa).

The signal sequence occupies residues 1 to 30 (MGAMWMKSMLLVLLLCMLMVTPMTGARSDN).

Belongs to the protease inhibitor I6 (cereal trypsin/alpha-amylase inhibitor) family. Homodimer. Post-translationally, five disulfide bonds, which are essential for the inhibitor activity, are probably present. Endosperm.

The protein localises to the secreted. In terms of biological role, could be involved in insect defense mechanisms. Inhibits insect-type alpha-amylase. The protein is Alpha-amylase inhibitor BDAI-1 (IAD1) of Hordeum vulgare (Barley).